We begin with the raw amino-acid sequence, 418 residues long: Ras association domain-containing protein 5 (418 aa).

Positions 1-118 (MAMASPAIGQ…QPQDPRVPAE (118 aa)) are disordered. Position 2 is an N-acetylthreonine (alanine 2). Residues 77–89 (SRPARPLRPGLQQ) are compositionally biased toward low complexity. Residues 122 to 170 (GHCFAELVLPGGPGWCDLCGREVLRQALRCTNCKFTCHPECRSLIQLDC) form a Phorbol-ester/DAG-type zinc finger. Phosphoserine is present on residues serine 182 and serine 279. Residues 274–364 (TDKRTSFYLP…LSFVLKENET (91 aa)) enclose the Ras-associating domain. Position 352 is a phosphothreonine (threonine 352). Positions 366 to 413 (EVEWDAFSIPELQNFLTILEKEEQDKIQQVQKKYDKFRQKLEEALRES) constitute an SARAH domain.

Interacts directly with activated HRAS; a RASSF5-STK4/MST1 complex probably associates with activated HRAS. Interacts with KRAS. Probably interacts with Ras-like GTPases RRAS, MRAS, RAP1B, RAP2A and RALA. Interacts with RRAS2. Can self-associate. Interacts with RSSF1 isoform A. The RSSF1 isoform A-RSSF5 heterodimer probably mediates the association of RSSF1 with HRAS. Isoform 2 interacts with activated RAP1A and ITGAL/LFA-1. Binds STK4/MST1, inhibiting STK4/MST1 autoactivation. In terms of tissue distribution, widely expressed. Frequently down-regulated in lung tumor cell lines and primary lung tumors.

It localises to the cytoplasm. Its subcellular location is the cytoskeleton. Potential tumor suppressor. Seems to be involved in lymphocyte adhesion by linking RAP1A activation upon T-cell receptor or chemokine stimulation to integrin activation. Isoform 2 stimulates lymphocyte polarization and the patch-like distribution of ITGAL/LFA-1, resulting in an enhanced adhesion to ICAM1. Together with RAP1A may participate in regulation of microtubule growth. The association of isoform 2 with activated RAP1A is required for directional movement of endothelial cells during wound healing. May be involved in regulation of Ras apoptotic function. The RASSF5-STK4/MST1 complex may mediate HRAS and KRAS induced apoptosis. The polypeptide is Ras association domain-containing protein 5 (RASSF5) (Homo sapiens (Human)).